The chain runs to 970 residues: Protein bicaudal C homolog 1-B (970 aa).

A disordered region spans residues 1–50 (MAAQCGGYMNQSDPGSNSERSADSPLPGSEDDSPGSAAPHDPEWREERFR). The span at 9-19 (MNQSDPGSNSE) shows a compositional bias: polar residues. Basic and acidic residues predominate over residues 40-50 (HDPEWREERFR). 2 consecutive KH domains span residues 130–197 (RVTL…RVRI) and 282–346 (PVST…RQYL). Residues 596-605 (EASRQSNNHS) show a composition bias toward polar residues. 3 disordered regions span residues 596 to 638 (EASR…SANT), 677 to 696 (SDSE…APGS), and 773 to 841 (RRAN…NKSA). The span at 606–616 (SAEEVNSKTDS) shows a compositional bias: basic and acidic residues. Composition is skewed to polar residues over residues 783-810 (TMST…GSDS) and 819-831 (IDSS…SSIG). In terms of domain architecture, SAM spans 869-932 (FKGSDLPELF…LLAISELNKN (64 aa)).

The protein belongs to the BicC family.

Its function is as follows. Putative RNA-binding protein. May be involved in regulating gene expression during embryonic development. Seems to be involved in endoderm formation. Ectopic expression results in endoderm formation in the absence of mesoderm induction. The chain is Protein bicaudal C homolog 1-B (bicc1-b) from Xenopus laevis (African clawed frog).